A 1272-amino-acid polypeptide reads, in one-letter code: AF4/FMR2 family member 2 (1272 aa).

Disordered stretches follow at residues 151–190 (SNRK…DPPQ), 204–231 (PQIG…DTFK), 372–401 (TLQK…EDDL), 422–497 (KAKP…QLDK), 557–694 (IREK…ETLQ), 715–743 (TLST…PAMQ), and 772–899 (PGQN…QDKN). Basic and acidic residues predominate over residues 155–164 (SKSEWPRDSH). Positions 165 to 179 (NTSPAQASQTSSQPN) are enriched in low complexity. Positions 180–189 (KMQTSTQDPP) are enriched in polar residues. The span at 210–227 (EKSNPSSKEENNPNSGGE) shows a compositional bias: low complexity. The segment covering 374 to 384 (QKWSDPSSRAS) has biased composition (polar residues). The span at 387 to 396 (MLEDDLKLSS) shows a compositional bias: basic and acidic residues. Ser-395 bears the Phosphoserine mark. Residues 436–450 (TPQSTPATQTNVGSG) are compositionally biased toward polar residues. A Phosphothreonine modification is found at Thr-482. Residues 580 to 590 (STSVDTVSQRT) show a composition bias toward polar residues. Positions 620-633 (PKEKGSVELPDPPR) are enriched in basic and acidic residues. Over residues 634–644 (SRNKATAHKPV) the composition is skewed to basic residues. Low complexity predominate over residues 715–734 (TLSTLTNGNSNNLSTSNEET). The segment covering 815–831 (PAETAEKIPEKKQRLED) has biased composition (basic and acidic residues). A compositionally biased stretch (pro residues) spans 841–850 (CISPAPPHKP). Positions 887-899 (VSGNNGHFGQDKN) are enriched in polar residues.

The protein belongs to the AF4 family. Highly expressed in the hippocampus, the piriform cortex, Purkinje cells and the cingulate gyrus.

The protein localises to the nucleus speckle. In terms of biological role, RNA-binding protein. Might be involved in alternative splicing regulation through an interaction with G-quartet RNA structure. This Mus musculus (Mouse) protein is AF4/FMR2 family member 2.